A 251-amino-acid polypeptide reads, in one-letter code: tRNA (guanine-N(7)-)-methyltransferase (251 aa).

Residues Gly71, 94-95 (EL), 128-129 (NS), and Leu148 each bind S-adenosyl-L-methionine. Asp151 is a catalytic residue. Position 226–228 (226–228 (TEE)) interacts with S-adenosyl-L-methionine.

This sequence belongs to the class I-like SAM-binding methyltransferase superfamily. TrmB family.

The protein resides in the nucleus. It catalyses the reaction guanosine(46) in tRNA + S-adenosyl-L-methionine = N(7)-methylguanosine(46) in tRNA + S-adenosyl-L-homocysteine. It participates in tRNA modification; N(7)-methylguanine-tRNA biosynthesis. In terms of biological role, catalyzes the formation of N(7)-methylguanine at position 46 (m7G46) in tRNA. This Arabidopsis thaliana (Mouse-ear cress) protein is tRNA (guanine-N(7)-)-methyltransferase.